The primary structure comprises 473 residues: Aspartyl aminopeptidase 1 (473 aa).

His-93 contributes to the Zn(2+) binding site. Substrate is bound at residue His-168. Positions 262, 298, 299, and 343 each coordinate Zn(2+). Residue Glu-298 participates in substrate binding. Substrate-binding residues include Asp-343, His-346, Lys-371, and Tyr-378. His-437 is a Zn(2+) binding site.

The protein belongs to the peptidase M18 family. As to quaternary structure, tetrahedron-shaped homododecamer built from six homodimers. Interacts with autophagy receptor Nbr1. Requires Zn(2+) as cofactor.

It localises to the cytoplasm. It is found in the vacuole lumen. The catalysed reaction is Release of an N-terminal aspartate or glutamate from a peptide, with a preference for aspartate.. Functionally, aspartyl aminopeptidase that is able to remove aspartyl residue at N-terminus of angiotensin I. Also acts as a chaperone and efficiently suppressed the thermal aggregation of citrate synthase. The polypeptide is Aspartyl aminopeptidase 1 (ape4) (Schizosaccharomyces pombe (strain 972 / ATCC 24843) (Fission yeast)).